The primary structure comprises 28 residues: Somatostatin-2 (28 aa).

C17 and C28 are oxidised to a cystine.

This sequence belongs to the somatostatin family.

It is found in the secreted. Functionally, somatostatin inhibits the release of somatotropin. In Oreochromis niloticus (Nile tilapia), this protein is Somatostatin-2 (sst2).